The chain runs to 219 residues: DnaJ homolog subfamily C member 30, mitochondrial (219 aa).

The transit peptide at 1-38 directs the protein to the mitochondrion; the sequence is MAAARCLGWTLSPLWRWWQVRGLPPSSATGLCSRGRTY. Residues 42 to 107 enclose the J domain; the sequence is ALYELLGVPS…ILRRKYDRGL (66 aa). Residues 109–148 are disordered; the sequence is SDQDLRGPGVKPSKTPVADPAPPRPPPYTPRAPGGSRASP. Residues 127–138 are compositionally biased toward pro residues; that stretch reads DPAPPRPPPYTP. Residues 202–218 form a helical membrane-spanning segment; sequence ATFFVVLFLIFVFVGFR.

Associates with the ATP synthase complex. Interacts with MT-ATP6; interaction is direct. Interacts with ATP5MC2; interaction is direct. In brain, expressed in gray matter structures.

Its subcellular location is the mitochondrion inner membrane. Its function is as follows. Mitochondrial protein enriched in neurons that acts as a regulator of mitochondrial respiration. Associates with the ATP synthase complex and facilitates ATP synthesis. May be a chaperone protein involved in the turnover of the subunits of mitochondrial complex I N-module. It facilitates the degradation of N-module subunits damaged by oxidative stress, and contributes to complex I functional efficiency. This chain is DnaJ homolog subfamily C member 30, mitochondrial, found in Mus musculus (Mouse).